A 945-amino-acid chain; its full sequence is Glutamyl aminopeptidase (945 aa).

At 1–18 (MNFAEEEPSKKYCIKGKH) the chain is on the cytoplasmic side. Residues 19 to 39 (VAIICATVVAVGLIVGLSVGL) form a helical; Signal-anchor for type II membrane protein membrane-spanning segment. At 40–945 (TRSCEPGTTP…SISEWFTSMP (906 aa)) the chain is on the extracellular side. Residues 45–77 (PGTTPAPSNPPPHTSTALPPQDQNVCPDSDDES) form a disordered region. Asparagine 116 and asparagine 189 each carry an N-linked (GlcNAc...) asparagine glycan. Glutamate 215 is a binding site for substrate. 2 N-linked (GlcNAc...) asparagine glycosylation sites follow: asparagine 236 and asparagine 316. A substrate-binding site is contributed by 349–353 (GAMEN). Position 385 (histidine 385) interacts with Zn(2+). Glutamate 386 acts as the Proton acceptor in catalysis. Positions 389 and 408 each coordinate Zn(2+). Asparagine 546, asparagine 584, asparagine 601, asparagine 640, asparagine 669, asparagine 754, asparagine 766, and asparagine 792 each carry an N-linked (GlcNAc...) asparagine glycan. Substrate is bound at residue arginine 878.

The protein belongs to the peptidase M1 family. As to quaternary structure, homodimer; disulfide-linked. Requires Zn(2+) as cofactor. Highest expression in kidney proximal tubules and ileum enterocytes. High expression also detected in liver and pituitary. Lower levels in heart, adrenal gland and brain. Not detected in aorta, lung or spleen. In heart, higher levels in ventricle than in atrium. Also expressed in glomerular mesangial cells.

It is found in the cell membrane. The catalysed reaction is Release of N-terminal glutamate (and to a lesser extent aspartate) from a peptide.. Its activity is regulated as follows. Substrate specificity is modulated by calcium which enhances the enzymatic activity for cleavage of acidic residues while reducing its activity with basic residues. Inhibited by aminopeptidase inhibitors amastatin and bestatin. Regulates central hypertension through its calcium-modulated preference to cleave N-terminal acidic residues from peptides such as angiotensin II. This Rattus norvegicus (Rat) protein is Glutamyl aminopeptidase (Enpep).